A 403-amino-acid polypeptide reads, in one-letter code: NADH-quinone oxidoreductase subunit D (403 aa).

This sequence belongs to the complex I 49 kDa subunit family. NDH-1 is composed of 14 different subunits. Subunits NuoB, C, D, E, F, and G constitute the peripheral sector of the complex.

It is found in the cell inner membrane. It catalyses the reaction a quinone + NADH + 5 H(+)(in) = a quinol + NAD(+) + 4 H(+)(out). NDH-1 shuttles electrons from NADH, via FMN and iron-sulfur (Fe-S) centers, to quinones in the respiratory chain. The immediate electron acceptor for the enzyme in this species is believed to be ubiquinone. Couples the redox reaction to proton translocation (for every two electrons transferred, four hydrogen ions are translocated across the cytoplasmic membrane), and thus conserves the redox energy in a proton gradient. In Erythrobacter litoralis (strain HTCC2594), this protein is NADH-quinone oxidoreductase subunit D.